Consider the following 346-residue polypeptide: uncharacterized protein (346 aa).

A helical membrane pass occupies residues 16–36; sequence ILGIIICIILIVGFFISFDST.

The protein resides in the membrane. This is an uncharacterized protein from Methanocaldococcus jannaschii (strain ATCC 43067 / DSM 2661 / JAL-1 / JCM 10045 / NBRC 100440) (Methanococcus jannaschii).